A 144-amino-acid polypeptide reads, in one-letter code: Peroxisomal membrane protein PEX34 (144 aa).

Helical transmembrane passes span 18-30, 52-73, and 109-131; these read NIWS…LDFF, VWLC…KLCK, and TAAL…RLFK.

As to quaternary structure, homooligomer. Interacts with PEX11, PEX25 and PEX27.

The protein localises to the peroxisome membrane. Functionally, in concert with the three peroxisome divisional factors, PEX11, PEX25 and PEX27, controls peroxisome morphology and abundance under conditions of peroxisome proliferation. Maintains mature peroxisomes in actively dividing cells. The protein is Peroxisomal membrane protein PEX34 (PEX34) of Saccharomyces cerevisiae (strain ATCC 204508 / S288c) (Baker's yeast).